The following is a 308-amino-acid chain: Reaction center protein M chain (308 aa).

3 helical membrane-spanning segments follow: residues 54–80 (GSLGVLSLFSGLMWFFTIGIWFWYQAG), 111–140 (KEGGLWLIASFFMFVAVWSWWGRTYLRAQA), and 143–168 (MGKHTAWAFLSAIWLWMVLGFIRPIL). Histidine 183 and histidine 203 together coordinate (7R,8Z)-bacteriochlorophyll b. Residues 198-226 (FYNPFHGLSIAFLYGSALLFAMHGATILA) traverse the membrane as a helical segment. Histidine 220 and glutamate 235 together coordinate Fe cation. An a ubiquinone-binding site is contributed by tryptophan 253. Residues 260–286 (NATMEGIHRWAIWMAVLVTLTGGIGIL) form a helical membrane-spanning segment. Position 267 (histidine 267) interacts with Fe cation.

This sequence belongs to the reaction center PufL/M/PsbA/D family. In terms of assembly, reaction center is composed of four bacteriochlorophylls, two bacteriopheophytins, two ubiquinones, one iron, and three highly hydrophobic polypeptide chains (designated L, M, and H).

Its subcellular location is the cellular chromatophore membrane. Its function is as follows. The reaction center is a membrane-bound complex that mediates the initial photochemical event in the electron transfer process of photosynthesis. This Cereibacter sphaeroides (strain ATCC 17023 / DSM 158 / JCM 6121 / CCUG 31486 / LMG 2827 / NBRC 12203 / NCIMB 8253 / ATH 2.4.1.) (Rhodobacter sphaeroides) protein is Reaction center protein M chain (pufM).